Here is a 291-residue protein sequence, read N- to C-terminus: ATP synthase gamma chain (291 aa).

The protein belongs to the ATPase gamma chain family. As to quaternary structure, F-type ATPases have 2 components, CF(1) - the catalytic core - and CF(0) - the membrane proton channel. CF(1) has five subunits: alpha(3), beta(3), gamma(1), delta(1), epsilon(1). CF(0) has three main subunits: a, b and c.

Its subcellular location is the cell inner membrane. In terms of biological role, produces ATP from ADP in the presence of a proton gradient across the membrane. The gamma chain is believed to be important in regulating ATPase activity and the flow of protons through the CF(0) complex. This is ATP synthase gamma chain from Xanthobacter autotrophicus (strain ATCC BAA-1158 / Py2).